The following is a 296-amino-acid chain: Fructose-bisphosphate aldolase class 1 (296 aa).

Glu175 acts as the Proton acceptor in catalysis. Lys212 acts as the Schiff-base intermediate with dihydroxyacetone-P in catalysis.

This sequence belongs to the class I fructose-bisphosphate aldolase family.

It catalyses the reaction beta-D-fructose 1,6-bisphosphate = D-glyceraldehyde 3-phosphate + dihydroxyacetone phosphate. The protein operates within carbohydrate degradation; glycolysis; D-glyceraldehyde 3-phosphate and glycerone phosphate from D-glucose: step 4/4. The protein is Fructose-bisphosphate aldolase class 1 of Staphylococcus aureus (strain USA300).